The following is a 299-amino-acid chain: Probable lipid kinase YegS (299 aa).

The 132-residue stretch at 2–133 folds into the DAGKc domain; sequence ADLPASLLIL…IDIAQVNKET (132 aa). Residues threonine 40, 66–72, and threonine 95 contribute to the ATP site; that span reads GDGTINE. Residues leucine 215, aspartate 218, and leucine 220 each contribute to the Mg(2+) site. Residue glutamate 271 is the Proton acceptor of the active site.

This sequence belongs to the diacylglycerol/lipid kinase family. YegS lipid kinase subfamily. The cofactor is Mg(2+). Ca(2+) is required as a cofactor.

The protein localises to the cytoplasm. Its function is as follows. Probably phosphorylates lipids; the in vivo substrate is unknown. The chain is Probable lipid kinase YegS from Escherichia fergusonii (strain ATCC 35469 / DSM 13698 / CCUG 18766 / IAM 14443 / JCM 21226 / LMG 7866 / NBRC 102419 / NCTC 12128 / CDC 0568-73).